We begin with the raw amino-acid sequence, 118 residues long: NLVQFTYLIQCANSGKRASYHYADYGCYCGAGGSGTPVDELDRCCKIHDNCYGEAEKMGCYPKLTMYNYYCGTQSPTCDDKTGCQRYVCACDLEAAKCFARSPYNNKNYNIDTSKRCK.

Disulfide bonds link Cys-11/Cys-71, Cys-27/Cys-117, Cys-29/Cys-45, Cys-44/Cys-98, Cys-51/Cys-91, Cys-60/Cys-84, and Cys-78/Cys-89. Residues Tyr-28, Gly-30, and Gly-32 each contribute to the Ca(2+) site. The active site involves His-48. Asp-49 is a Ca(2+) binding site. The active site involves Asp-92.

This sequence belongs to the phospholipase A2 family. Group I subfamily. D49 sub-subfamily. As to quaternary structure, monomer. Ca(2+) serves as cofactor. In terms of tissue distribution, expressed by the venom gland.

Its subcellular location is the secreted. It carries out the reaction a 1,2-diacyl-sn-glycero-3-phosphocholine + H2O = a 1-acyl-sn-glycero-3-phosphocholine + a fatty acid + H(+). In terms of biological role, PLA2 catalyzes the calcium-dependent hydrolysis of the 2-acyl groups in 3-sn-phosphoglycerides. The protein is Basic phospholipase A2 3 of Laticauda semifasciata (Black-banded sea krait).